We begin with the raw amino-acid sequence, 294 residues long: Phosphoribosylaminoimidazole-succinocarboxamide synthase (294 aa).

Belongs to the SAICAR synthetase family.

The enzyme catalyses 5-amino-1-(5-phospho-D-ribosyl)imidazole-4-carboxylate + L-aspartate + ATP = (2S)-2-[5-amino-1-(5-phospho-beta-D-ribosyl)imidazole-4-carboxamido]succinate + ADP + phosphate + 2 H(+). The protein operates within purine metabolism; IMP biosynthesis via de novo pathway; 5-amino-1-(5-phospho-D-ribosyl)imidazole-4-carboxamide from 5-amino-1-(5-phospho-D-ribosyl)imidazole-4-carboxylate: step 1/2. This chain is Phosphoribosylaminoimidazole-succinocarboxamide synthase, found in Thermoplasma acidophilum (strain ATCC 25905 / DSM 1728 / JCM 9062 / NBRC 15155 / AMRC-C165).